A 271-amino-acid chain; its full sequence is Elongation factor Ts (271 aa).

An involved in Mg(2+) ion dislocation from EF-Tu region spans residues 76–79 (TDFV).

This sequence belongs to the EF-Ts family.

The protein resides in the cytoplasm. Functionally, associates with the EF-Tu.GDP complex and induces the exchange of GDP to GTP. It remains bound to the aminoacyl-tRNA.EF-Tu.GTP complex up to the GTP hydrolysis stage on the ribosome. This Mycolicibacterium gilvum (strain PYR-GCK) (Mycobacterium gilvum (strain PYR-GCK)) protein is Elongation factor Ts.